A 476-amino-acid chain; its full sequence is Riboflavin transporter rft-2 (476 aa).

A helical transmembrane segment spans residues Met1–Gly21. Residues Thr22–Asn41 lie on the Cytoplasmic side of the membrane. A helical membrane pass occupies residues Leu42–Ile62. The Extracellular portion of the chain corresponds to Leu63–Ala75. Residues Pro76–Trp96 form a helical membrane-spanning segment. Over Ser97 to Ser113 the chain is Cytoplasmic. Residues Leu114–Ala134 form a helical membrane-spanning segment. At Gln135 to Tyr140 the chain is on the extracellular side. Residues Leu141–Ala161 traverse the membrane as a helical segment. The Cytoplasmic segment spans residues Gln162–Ser185. The helical transmembrane segment at Ile186–Tyr206 threads the bilayer. Residues Arg207–Lys306 are Extracellular-facing. A disordered region spans residues Ala215–Ile249. Residues Asn218–Leu232 are compositionally biased toward basic and acidic residues. Asn233 carries an N-linked (GlcNAc...) asparagine glycan. Residues Phe307–Ser327 traverse the membrane as a helical segment. The Cytoplasmic portion of the chain corresponds to Val328–His342. The helical transmembrane segment at Phe343–Ser363 threads the bilayer. The Extracellular portion of the chain corresponds to Val364–Ser366. The helical transmembrane segment at Ile367–Leu387 threads the bilayer. Residues Ala388–Asn393 are Cytoplasmic-facing. A helical membrane pass occupies residues Leu394 to Ala414. Residues Gly415 to Arg437 lie on the Extracellular side of the membrane. A helical membrane pass occupies residues Leu438 to Pro458. Residues Leu459–Ser476 are Cytoplasmic-facing.

This sequence belongs to the riboflavin transporter family. In terms of tissue distribution, expressed in intestine and pharynx.

Its subcellular location is the cell membrane. It carries out the reaction riboflavin(in) = riboflavin(out). In terms of biological role, riboflavin transporter. The chain is Riboflavin transporter rft-2 from Caenorhabditis elegans.